We begin with the raw amino-acid sequence, 446 residues long: tRNA modification GTPase MnmE (446 aa).

(6S)-5-formyl-5,6,7,8-tetrahydrofolate contacts are provided by Arg-24, Glu-81, and Lys-120. One can recognise a TrmE-type G domain in the interval 216-368 (GLHAVLIGPP…LHTRLRELAL (153 aa)). Asn-226 contacts K(+). GTP-binding positions include 226 to 231 (NAGKSS), 245 to 251 (TDVAGTT), and 270 to 273 (DTAG). Ser-230 serves as a coordination point for Mg(2+). K(+)-binding residues include Thr-245, Val-247, and Thr-250. Thr-251 is a binding site for Mg(2+). Lys-446 serves as a coordination point for (6S)-5-formyl-5,6,7,8-tetrahydrofolate.

Belongs to the TRAFAC class TrmE-Era-EngA-EngB-Septin-like GTPase superfamily. TrmE GTPase family. As to quaternary structure, homodimer. Heterotetramer of two MnmE and two MnmG subunits. It depends on K(+) as a cofactor.

Its subcellular location is the cytoplasm. Functionally, exhibits a very high intrinsic GTPase hydrolysis rate. Involved in the addition of a carboxymethylaminomethyl (cmnm) group at the wobble position (U34) of certain tRNAs, forming tRNA-cmnm(5)s(2)U34. This Xanthomonas campestris pv. campestris (strain 8004) protein is tRNA modification GTPase MnmE.